The following is a 209-amino-acid chain: Redox-sensing transcriptional repressor Rex (209 aa).

Positions 16 to 55 (LYYRFIQNLSLSGKQRVSSAELSEAVKVDSATIRRDFSYF) form a DNA-binding region, H-T-H motif. 90–95 (GVGNLG) serves as a coordination point for NAD(+).

This sequence belongs to the transcriptional regulatory Rex family. In terms of assembly, homodimer.

The protein resides in the cytoplasm. In terms of biological role, modulates transcription in response to changes in cellular NADH/NAD(+) redox state. In Bacillus mycoides (strain KBAB4) (Bacillus weihenstephanensis), this protein is Redox-sensing transcriptional repressor Rex.